Reading from the N-terminus, the 472-residue chain is 3-isopropylmalate dehydratase large subunit (472 aa).

Cys-350, Cys-411, and Cys-414 together coordinate [4Fe-4S] cluster.

The protein belongs to the aconitase/IPM isomerase family. LeuC type 1 subfamily. Heterodimer of LeuC and LeuD. The cofactor is [4Fe-4S] cluster.

It carries out the reaction (2R,3S)-3-isopropylmalate = (2S)-2-isopropylmalate. It functions in the pathway amino-acid biosynthesis; L-leucine biosynthesis; L-leucine from 3-methyl-2-oxobutanoate: step 2/4. Its function is as follows. Catalyzes the isomerization between 2-isopropylmalate and 3-isopropylmalate, via the formation of 2-isopropylmaleate. In Alcanivorax borkumensis (strain ATCC 700651 / DSM 11573 / NCIMB 13689 / SK2), this protein is 3-isopropylmalate dehydratase large subunit.